The sequence spans 88 residues: Small ribosomal subunit protein bS16 (88 aa).

Belongs to the bacterial ribosomal protein bS16 family.

The chain is Small ribosomal subunit protein bS16 from Mesomycoplasma hyopneumoniae (strain 232) (Mycoplasma hyopneumoniae).